A 528-amino-acid polypeptide reads, in one-letter code: MVIGAAARVAIGGCRKLISSHTSLLLVSSQCRQMSMDAQSVSEKLRSSGLLRTQGLIGGKWLDSYDNKTIKVNNPATGEIIADVACMGTKETNDAIASSYEAFTSWSRLTAGERSKVLRRWYDLLIAHKEELGQLITLEQGKPLKEAIGEVAYGASFIEYYAEEAKRVYGDIIPPNLSDRRLLVLKQPVGVVGAITPWNFPLAMITRKVGPALASGCTVVVKPSELTPLTALAAAELALQAGVPPGALNVVMGNAPEIGDALLTSPQVRKITFTGSTAVGKKLMAAAAPTVKKVSLELGGNAPSIVFDDADLDVAVKGTLAAKFRNSGQTCVCANRVLVQDGIYDKFAEAFSEAVQKLEVGDGFRDGTTQGPLINDAAVQKVETFVQDAVSKGAKIIIGGKRHSLGMTFYEPTVIRDVSDNMIMSKEEIFGPVAPLIRFKTEEDAIRIANDTIAGLAAYIFTNSVQRSWRVFEALEYGLVGVNEGLISTEVAPFGGVKQSGLGREGSKYGMDEYLEIKYVCLGDMNRH.

Residues 1–34 constitute a mitochondrion transit peptide; sequence MVIGAAARVAIGGCRKLISSHTSLLLVSSQCRQM. Residue 196–198 coordinates NAD(+); it reads TPW. Residue R207 participates in substrate binding. NAD(+)-binding positions include 222–225, 275–280, and E297; these read KPSE and GSTAVG. E297 functions as the Proton acceptor in the catalytic mechanism. R325 is a binding site for substrate. Residue C331 is the Nucleophile of the active site. Residues C331 and C333 are joined by a disulfide bond. 428–430 is an NAD(+) binding site; that stretch reads EIF. S488 contributes to the substrate binding site.

Belongs to the aldehyde dehydrogenase family. Homotetramer. As to expression, expressed in developing leaf tissues.

It is found in the mitochondrion matrix. The enzyme catalyses succinate semialdehyde + NAD(+) + H2O = succinate + NADH + 2 H(+). It functions in the pathway amino-acid degradation; 4-aminobutanoate degradation. Its activity is regulated as follows. Competitive inhibition by NADH. Inhibited by ATP, ADP and AMP. Redox-regulated. Inhibited under oxydizing conditions. Functionally, oxidizes specifically succinate semialdehyde. Involved in plant response to environmental stress by preventing the accumulation of reactive oxygen species, probably by regulating proline, gamma-hydroxybutyrate (GHB) and gamma-aminobutyrate (GABA) levels. Required for the maintenance of the shoot apical meristem (SAM) structure and subsequent adaxial-abaxial axis-dependent development of cotyledons and leaves. The chain is Succinate-semialdehyde dehydrogenase, mitochondrial from Arabidopsis thaliana (Mouse-ear cress).